The sequence spans 68 residues: Beta-defensin 1 (68 aa).

The signal sequence occupies residues 1–21 (MRTSYLLLFTLCLLLSEIASG). Residues 22–32 (GNFLTGLGHRS) constitute a propeptide that is removed on maturation. 3 cysteine pairs are disulfide-bonded: Cys-37–Cys-66, Cys-44–Cys-59, and Cys-49–Cys-67.

Belongs to the beta-defensin family. Monomer. Homodimer.

Its subcellular location is the secreted. It is found in the membrane. In terms of biological role, has bactericidal activity. May act as a ligand for C-C chemokine receptor CCR6. Positively regulates the sperm motility and bactericidal activity in a CCR6-dependent manner. Binds to CCR6 and triggers Ca2+ mobilization in the sperm which is important for its motility. This chain is Beta-defensin 1 (DEFB1), found in Gorilla gorilla gorilla (Western lowland gorilla).